The primary structure comprises 553 residues: Putative ABC transporter ATP-binding protein BCE_3323 (553 aa).

2 ABC transporter domains span residues 7 to 245 (AEIN…FRPF) and 295 to 527 (LSAE…SINR). ATP contacts are provided by residues 41-48 (GGSGSGKT) and 329-336 (GKNGTGKS).

Belongs to the ABC transporter superfamily.

The protein localises to the cell membrane. In terms of biological role, probably part of an ABC transporter complex. Responsible for energy coupling to the transport system. This is Putative ABC transporter ATP-binding protein BCE_3323 from Bacillus cereus (strain ATCC 10987 / NRS 248).